The primary structure comprises 199 residues: Inactive glutathione S-transferase D3 (199 aa).

In terms of domain architecture, GST N-terminal spans 1 to 64 (MVGKALGLEF…YLVEKYGKDD (64 aa)). Glutathione-binding positions include 34–36 (HSI) and 48–50 (ESR). The GST C-terminal domain maps to 70-199 (DIQKQAVINQ…RIEEKQNAAK (130 aa)).

It belongs to the GST superfamily. Delta family. In terms of assembly, homodimer.

Has no glutathione S-transferase activity. This chain is Inactive glutathione S-transferase D3, found in Drosophila melanogaster (Fruit fly).